The chain runs to 443 residues: Magnesium transporter MRS2 homolog, mitochondrial (443 aa).

A mitochondrion-targeting transit peptide spans 1–49 (MECLRSLPCLLPRAMRLPRRTLCALALDLTSVAPPVAASGRRANLIGRS). Over 50–339 (RAAQLCEPGR…SHRNVMMRLN (290 aa)) the chain is Mitochondrial matrix. Positions 243, 246, 247, 312, and 329 each coordinate Mg(2+). Residues 340-359 (LQLTMGTFSLSLFGLMGVAF) form a helical membrane-spanning segment. Gly-360 and Asn-362 together coordinate Mg(2+). Positions 360–362 (GMN) match the GMN motif motif. At 360-370 (GMNLESSLEED) the chain is on the mitochondrial intermembrane side. The helical transmembrane segment at 371–401 (HRIFWLITGIMFMGSGLIWRRLLSFLGRQLE) threads the bilayer. Residues 402–443 (APLPPMMASLPKKTLLADRSMELKNSLRLDGLGSGRSILTNR) lie on the Mitochondrial matrix side of the membrane.

It belongs to the CorA metal ion transporter (MIT) (TC 1.A.35) family. Homopentamer.

The protein resides in the mitochondrion inner membrane. May be regulated by calcium ions. Functionally, magnesium transporter that mediates the influx of magnesium into the mitochondrial matrix and regulates magnesium metabolism. Also permeable to calcium, sodium and potassium ions. Required for normal expression of the mitochondrial respiratory complex I subunits. May play a role in maintaining the inner mitochondrial membrane potential. The protein is Magnesium transporter MRS2 homolog, mitochondrial (MRS2) of Pongo abelii (Sumatran orangutan).